We begin with the raw amino-acid sequence, 244 residues long: Proteasome subunit alpha 2 (244 aa).

It belongs to the peptidase T1A family. In terms of assembly, the 20S proteasome core is composed of 14 alpha and 14 beta subunits that assemble into four stacked heptameric rings, resulting in a barrel-shaped structure. The two inner rings, each composed of seven catalytic beta subunits, are sandwiched by two outer rings, each composed of seven alpha subunits. The catalytic chamber with the active sites is on the inside of the barrel. Has a gated structure, the ends of the cylinder being occluded by the N-termini of the alpha-subunits. Is capped at one or both ends by the proteasome regulatory ATPase, PAN.

It is found in the cytoplasm. Its activity is regulated as follows. The formation of the proteasomal ATPase PAN-20S proteasome complex, via the docking of the C-termini of PAN into the intersubunit pockets in the alpha-rings, triggers opening of the gate for substrate entry. Interconversion between the open-gate and close-gate conformations leads to a dynamic regulation of the 20S proteasome proteolysis activity. Its function is as follows. Component of the proteasome core, a large protease complex with broad specificity involved in protein degradation. The polypeptide is Proteasome subunit alpha 2 (Haloarcula marismortui (strain ATCC 43049 / DSM 3752 / JCM 8966 / VKM B-1809) (Halobacterium marismortui)).